The sequence spans 101 residues: Phosphoribosyl-AMP cyclohydrolase (101 aa).

Residue Asp71 participates in Mg(2+) binding. Residue Cys72 coordinates Zn(2+). The Mg(2+) site is built by Asp73 and Asp75. Zn(2+) contacts are provided by Cys88 and Cys95.

It belongs to the PRA-CH family. Homodimer. Mg(2+) serves as cofactor. Zn(2+) is required as a cofactor.

It localises to the cytoplasm. The enzyme catalyses 1-(5-phospho-beta-D-ribosyl)-5'-AMP + H2O = 1-(5-phospho-beta-D-ribosyl)-5-[(5-phospho-beta-D-ribosylamino)methylideneamino]imidazole-4-carboxamide. The protein operates within amino-acid biosynthesis; L-histidine biosynthesis; L-histidine from 5-phospho-alpha-D-ribose 1-diphosphate: step 3/9. In terms of biological role, catalyzes the hydrolysis of the adenine ring of phosphoribosyl-AMP. This Bacillus cytotoxicus (strain DSM 22905 / CIP 110041 / 391-98 / NVH 391-98) protein is Phosphoribosyl-AMP cyclohydrolase.